Here is a 347-residue protein sequence, read N- to C-terminus: Trace amine-associated receptor 4 (347 aa).

The Extracellular portion of the chain corresponds to Met-1–Tyr-37. A glycan (N-linked (GlcNAc...) asparagine) is linked at Asn-20. 2 cysteine pairs are disulfide-bonded: Cys-23–Cys-187 and Cys-106–Cys-191. The chain crosses the membrane as a helical span at residues Leu-38–Ile-58. At Ala-59–Asn-69 the chain is on the cytoplasmic side. Residues Phe-70–Ser-90 form a helical membrane-spanning segment. The Extracellular segment spans residues Met-91–Ser-110. The helical transmembrane segment at Cys-111–Val-129 threads the bilayer. At Asp-130–Val-149 the chain is on the cytoplasmic side. Residues Val-150–Phe-170 form a helical membrane-spanning segment. Residues Ser-171–Lys-197 are Extracellular-facing. The segment at Leu-175–Thr-188 is extracellular Loop 2 (ECL2). The helical transmembrane segment at Leu-198–Ile-218 threads the bilayer. At Tyr-219–Lys-260 the chain is on the cytoplasmic side. A helical transmembrane segment spans residues Thr-261 to Ile-281. Residues Thr-282 to Asn-296 are Extracellular-facing. Residues Val-297–Tyr-317 traverse the membrane as a helical segment. The Cytoplasmic segment spans residues Pro-318–Pro-347.

Belongs to the G-protein coupled receptor 1 family.

The protein localises to the cell membrane. Olfactory receptor specific for 2-phenylethylamine, a trace amine present at high concentration in the urine of carnivore species, playing a key role in fear and avoidance responses. 2-phenylethylamine acts as a kairomone in the chemical detection of carnivore odor and triggers fear in rats. This receptor is probably mediated by the G(s)-class of G-proteins which activate adenylate cyclase. The protein is Trace amine-associated receptor 4 of Rattus norvegicus (Rat).